The chain runs to 133 residues: Large ribosomal subunit protein bL20 (133 aa).

It belongs to the bacterial ribosomal protein bL20 family.

Functionally, binds directly to 23S ribosomal RNA and is necessary for the in vitro assembly process of the 50S ribosomal subunit. It is not involved in the protein synthesizing functions of that subunit. This chain is Large ribosomal subunit protein bL20, found in Rubrobacter xylanophilus (strain DSM 9941 / JCM 11954 / NBRC 16129 / PRD-1).